We begin with the raw amino-acid sequence, 977 residues long: Short transient receptor potential channel 4 (977 aa).

Residues 1-324 (MAQFYYKRNV…YDEFPGWRRR (324 aa)) are Cytoplasmic-facing. 4 ANK repeats span residues 29 to 60 (LSPS…IYFK), 71 to 93 (RTAL…LSFN), 96 to 118 (VGDA…LLNH), and 141 to 165 (PDIT…VQKG). Residues His172, Cys176, Cys178, and Cys181 each coordinate Zn(2+). Residues 223–260 (LSWELQELSKVENEFKSEYEELSRQCKQFAKDLLDQTR) adopt a coiled-coil conformation. An intramembrane region (discontinuously helical) is located at residues 325-359 (HWAVKMVTCFIIGLLFPVFSVCYLIAPKSPLGLFI). At 360-362 (RKP) the chain is on the cytoplasmic side. The chain crosses the membrane as a helical span at residues 363 to 383 (FIKFICHTASYLTFLFLLLLA). The Extracellular segment spans residues 384-403 (SQHIDRSDLNRQGPPPTIVE). A helical transmembrane segment spans residues 404–418 (WMILPWVLGFIWGEI). Positions 417, 420, 435, and 438 each coordinate Ca(2+). The Cytoplasmic segment spans residues 419–432 (KQMWDGGLQDYIHD). The chain crosses the membrane as a helical span at residues 433 to 453 (WWNLMDFVMNSLYLATISLKI). Residues 454 to 475 (VAFVKYSALNPRESWDMWHPTL) lie on the Extracellular side of the membrane. Residues 476-498 (VAEALFAIANIFSSLRLISLFTA) traverse the membrane as a helical segment. The Cytoplasmic segment spans residues 499–511 (NSHLGPLQISLGR). Residues 512–534 (MLLDILKFLFIYCLVLLAFANGL) traverse the membrane as a helical segment. Over 535–599 (NQLYFYYEET…HEFTDFVGAT (65 aa)) the chain is Extracellular. A disulfide bridge links Cys549 with Cys554. Residues 600–620 (MFGTYNVISLVVLLNMLIAMM) form a helical membrane-spanning segment. The interval 615-977 (MLIAMMNNSY…AHEDYVTTRL (363 aa)) is interaction with ITPR1, ITPR2 and ITPR3. Residues 621-977 (NNSYQLIADH…AHEDYVTTRL (357 aa)) lie on the Cytoplasmic side of the membrane. A disordered region spans residues 767-790 (AASSASSADSDEKSHSEGNGKDKR). Residues 776-787 (SDEKSHSEGNGK) show a composition bias toward basic and acidic residues. Phosphotyrosine; by FYN is present on residues Tyr959 and Tyr972. Positions 975 to 977 (TRL) are PDZ-binding domain.

This sequence belongs to the transient receptor (TC 1.A.4) family. STrpC subfamily. TRPC4 sub-subfamily. Homotetramer. Heterotetramer with TRPC1 and/or TRPC5. Forms a heteromeric ion channel with TRPC1, with a 1:3 TRPC1:TRPC4 stoichiometry. Interacts with TRPC4AP. Isoform alpha but not isoform beta interacts with ITPR1, ITPR2 and ITPR3. Interacts with NHERF1. Interacts with MX1 and RNF24. Interacts (via CIRB domain) with SESTD1 (via the spectrin 1 repeat) and SPTBN5 (via C-terminus). Interacts with CDH5 and CTNNB1. Interacts (via protein 4.1-binding domain) with EPB41L2. Interacts with PLSCR1.

Its subcellular location is the cell membrane. The enzyme catalyses Ca(2+)(in) = Ca(2+)(out). It carries out the reaction Na(+)(in) = Na(+)(out). It catalyses the reaction Li(+)(in) = Li(+)(out). The catalysed reaction is Cs(+)(in) = Cs(+)(out). Its activity is regulated as follows. May be operated by a phosphatidylinositol second messenger system activated by receptor tyrosine kinases or G-protein coupled receptors. May be activated by intracellular calcium store depletion. Forms a receptor-activated non-selective calcium permeant cation channel. Acts as a cell-cell contact-dependent endothelial calcium entry channel. Forms a homomeric ion channel or a heteromeric ion channel with TRPC1; the heteromeric ion channel has reduced calcium permeability compared to the homomeric channel. Also permeable to monovalent ions including sodium, lithium and cesium ions. In terms of biological role, forms a non-selective a receptor-activated calcium permeant cation channel. Probably is operated by a phosphatidylinositol second messenger system activated by receptor tyrosine kinases or G-protein coupled receptors. This Rattus norvegicus (Rat) protein is Short transient receptor potential channel 4 (Trpc4).